The primary structure comprises 506 residues: Phase 2 flagellin (506 aa).

Belongs to the bacterial flagellin family.

The protein localises to the secreted. The protein resides in the bacterial flagellum. In terms of biological role, flagellin is the subunit protein which polymerizes to form the filaments of bacterial flagella. The protein is Phase 2 flagellin (fljB) of Salmonella typhimurium (strain LT2 / SGSC1412 / ATCC 700720).